Consider the following 355-residue polypeptide: Inositol polyphosphate multikinase (355 aa).

Met1 carries the N-acetylmethionine modification. Lys31 serves as a coordination point for ATP. A Phosphoserine modification is found at Ser97. Residues 118 to 120 and Asp131 contribute to the ATP site; that span reads ENL. Residue 127–135 participates in substrate binding; it reads PNILDIKLG. Ca(2+) contacts are provided by Glu271 and Asn274. Acidic residues predominate over residues 284–304; it reads FIDDDDDDDDNDDDDDDDAEG. The segment at 284-317 is disordered; it reads FIDDDDDDDDNDDDDDDDAEGSSEGPKDKKTTGS. ATP is bound at residue Asp325. Gly334 provides a ligand contact to Ca(2+).

It belongs to the inositol phosphokinase (IPK) family. Interacts with ARG80 and MCM1. Requires Ca(2+) as cofactor.

The protein localises to the nucleus. The catalysed reaction is 1D-myo-inositol 1,4,5-trisphosphate + 2 ATP = 1D-myo-inositol 1,3,4,5,6-pentakisphosphate + 2 ADP + 2 H(+). The enzyme catalyses 1D-myo-inositol 1,4,5-trisphosphate + ATP = 1D-myo-inositol 1,4,5,6-tetrakisphosphate + ADP + H(+). It carries out the reaction 1D-myo-inositol 1,4,5-trisphosphate + ATP = 1D-myo-inositol 1,3,4,5-tetrakisphosphate + ADP + H(+). It catalyses the reaction 1D-myo-inositol 1,4,5,6-tetrakisphosphate + ATP = 1D-myo-inositol 1,3,4,5,6-pentakisphosphate + ADP + H(+). The catalysed reaction is a 1,2-diacyl-sn-glycero-3-phospho-(1D-myo-inositol-4,5-bisphosphate) + ATP = a 1,2-diacyl-sn-glycero-3-phospho-(1D-myo-inositol-3,4,5-trisphosphate) + ADP + H(+). Inositol phosphate kinase with both monophosphoinositol and diphosphoinositol polyphosphate synthase activities. Able to phosphorylate inositol 1,4,5-trisphosphate (Ins(1,4,5)P3) on both the carbon-3 and carbon-6 positions to synthesize inositol 1,3,4,5-tetrakisphosphate (Ins(1,3,4,5)P4) and inositol 1,4,5,6-tetrakisphosphate (Ins(1,4,5,6)P4), and then to subsequently phosphorylate and convert either isomer of InsP4 to inositol 1,3,4,5,6-pentakisphosphate (Ins(1,3,4,5,6)P5). Its predominant in vivo catalytic function is to convert Ins(1,4,5)P3 to Ins(1,4,5,6)P4 to Ins(1,3,4,5,6)P5 via 6- and 3-kinase activities. It can also use Ins(1,3,4,5,6)P5 as a substrate and act as a diphosphoinositol polyphosphate synthase to generate two different isomers of PP-InsP4. Also has a role in transcription regulation. Forms a complex with ARG80, ARG81 and MCM1 (ArgR-MCM1), which coordinates the expression of arginine anabolic and catabolic genes in response to arginine. Recruits ARG80 and MCM21 to stabilize them. Neither the kinase activity nor inositol phosphates are required for the formation of ArgR-MCM1 transcriptional complexes on DNA promoter elements and the control of arginine metabolism. In contrast, only the catalytic activity is required for PHO gene repression by phosphate and for NCR gene activation in response to nitrogen availability, indicating a role for inositol pyrophosphates in these controls. Inositol polyphosphates may be involved in the regulation of chromatin remodeling of transcription. Regulates nuclear mRNA export via inositol phosphate metabolism. Also has lipid kinase activity, transforming the lipid inositol phosphatidylinositol 4,5-bisphosphate (PI(4,5)P2) into phosphatidylinositol 3,4,5-trisphosphate (PI(3,4,5)P3) in the nucleus. Its kinase activity is necessary for the propagation of most [PSI+] prion variants. The protein is Inositol polyphosphate multikinase (ARG82) of Saccharomyces cerevisiae (strain ATCC 204508 / S288c) (Baker's yeast).